The sequence spans 305 residues: Cytochrome c biogenesis protein CcsA (305 aa).

A run of 8 helical transmembrane segments spans residues 11-31, 36-56, 75-95, 97-117, 142-162, 212-232, 239-259, and 273-293; these read ANAS…KAIF, ILQL…ALLL, LMFL…YIQI, FIGF…TFFL, IMMA…AFLF, TIGI…VWAN, WSWD…AIYL, and AIVA…VNLL.

Belongs to the CcmF/CycK/Ccl1/NrfE/CcsA family. In terms of assembly, may interact with Ccs1.

It localises to the plastid. It is found in the chloroplast thylakoid membrane. In terms of biological role, required during biogenesis of c-type cytochromes (cytochrome c6 and cytochrome f) at the step of heme attachment. In Mesostigma viride (Green alga), this protein is Cytochrome c biogenesis protein CcsA.